The sequence spans 611 residues: tRNA uridine 5-carboxymethylaminomethyl modification enzyme MnmG (611 aa).

14–19 contributes to the FAD binding site; the sequence is GAGHAG. 274–288 serves as a coordination point for NAD(+); it reads GPRYCPSIEDKIVKF.

The protein belongs to the MnmG family. As to quaternary structure, homodimer. Heterotetramer of two MnmE and two MnmG subunits. FAD is required as a cofactor.

The protein resides in the cytoplasm. Functionally, NAD-binding protein involved in the addition of a carboxymethylaminomethyl (cmnm) group at the wobble position (U34) of certain tRNAs, forming tRNA-cmnm(5)s(2)U34. The polypeptide is tRNA uridine 5-carboxymethylaminomethyl modification enzyme MnmG (Chlamydia felis (strain Fe/C-56) (Chlamydophila felis)).